Consider the following 443-residue polypeptide: MSLETPRTHYTSQIDIEQIGDDKVTVCGWVHEVRDLGGICFVVVRDREGRAQITLVKKKIDKEIFDAARKLVRESIVAVTGTAKAEGKAPNGYEIIPESIVVLNEAESPLPMDTTGKVDAELDTRLDSRFMDLRRERTTAIFKIRHEVLRAVRDFLSKDGYIETCSPKVVATATEGGTSLFPITYFDREAFLNQSPQLFKQILMSGGLDKVFEIGPIFRAEEHDTRRHLNEATSIDIEASFLDHFDVMEVLEDMVAYVYEQVIENEAASLKALDIELSVPKTPFMKVPYSQAIDIVNAESEETVEWGGDLGTVAEHTIGEHVFKETGESHYFITDWPTEIKPFYAMPYEDNPLISKSFDMMHRTMELSSGAQRIHIHDMLKARIESQGLDSDGFDFYLRAFKYGMPPHSGWGIGCERLVMTMLSVENIRDTVLFPRDRKRLSP.

E175 contributes to the L-aspartate binding site. Residues 197–200 are aspartate; sequence QLFK. L-aspartate is bound at residue R219. Residues 219-221, 227-229, and E366 each bind ATP; these read RAE and RHL. The Mg(2+) site is built by E366 and S369. 2 residues coordinate L-aspartate: S369 and R373. 414–417 is a binding site for ATP; the sequence is GCER.

This sequence belongs to the class-II aminoacyl-tRNA synthetase family. Type 2 subfamily. In terms of assembly, homodimer. It depends on Mg(2+) as a cofactor.

It localises to the cytoplasm. It catalyses the reaction tRNA(Asx) + L-aspartate + ATP = L-aspartyl-tRNA(Asx) + AMP + diphosphate. Aspartyl-tRNA synthetase with relaxed tRNA specificity since it is able to aspartylate not only its cognate tRNA(Asp) but also tRNA(Asn). Reaction proceeds in two steps: L-aspartate is first activated by ATP to form Asp-AMP and then transferred to the acceptor end of tRNA(Asp/Asn). This is Aspartate--tRNA(Asp/Asn) ligase from Methanococcoides burtonii (strain DSM 6242 / NBRC 107633 / OCM 468 / ACE-M).